The sequence spans 119 residues: RNA guanine-N7 methyltransferase activating subunit (119 aa).

The tract at residues 1–55 is interaction with RNMT; the sequence is MSDTSEEIPNFEEMFASRFTKDDKEYQEYLKRPPESPPIVEEWNSRAGGNQRNRG. Residues 30–119 are disordered; sequence LKRPPESPPI…HNQRPPYGYY (90 aa). A Phosphoserine modification is found at S36. Positions 36-42 match the RNMT-activating domain motif; sequence SPPIVEE. The span at 47–61 shows a compositional bias: polar residues; the sequence is AGGNQRNRGNWLQDN. The RNA-binding stretch occupies residues 56–119; that stretch reads NWLQDNRQFR…HNQRPPYGYY (64 aa). The segment covering 62 to 73 has biased composition (basic and acidic residues); the sequence is RQFRGRDNRRGW. The residue at position 85 (R85) is an Omega-N-methylarginine. Position 86 is a phosphoserine (S86). Low complexity predominate over residues 89–112; it reads NNNYPQQRPEPYYQQQYTQYGHNQ.

Belongs to the RAM family. Interacts with RNMT; this interaction enhances mRNA binding and cap methyltransferase activity.

Its subcellular location is the nucleus. In terms of biological role, regulatory subunit of the mRNA-capping methyltransferase RNMT:RAMAC complex that methylates the N7 position of the added guanosine to the 5'-cap structure of mRNAs. Promotes the recruitment of the methyl donor, S-adenosyl-L-methionine, to RNMT. Regulates RNMT expression by a post-transcriptional stabilizing mechanism. Binds RNA. The protein is RNA guanine-N7 methyltransferase activating subunit (Ramac) of Mus musculus (Mouse).